The sequence spans 366 residues: Isopentenyl-diphosphate delta-isomerase (366 aa).

6 to 7 (RK) lines the substrate pocket. Residues threonine 63, 64–66 (GMT), serine 94, and asparagine 123 each bind FMN. 94-96 (SQR) contributes to the substrate binding site. Glutamine 158 serves as a coordination point for substrate. Residue glutamate 159 coordinates Mg(2+). Residues lysine 191, serine 216, threonine 221, 273–275 (GIR), and 294–295 (AN) each bind FMN.

Belongs to the IPP isomerase type 2 family. Homooctamer. Dimer of tetramers. FMN is required as a cofactor. It depends on NADPH as a cofactor. Mg(2+) serves as cofactor.

The protein resides in the cytoplasm. The enzyme catalyses isopentenyl diphosphate = dimethylallyl diphosphate. Functionally, involved in the biosynthesis of isoprenoids. Catalyzes the 1,3-allylic rearrangement of the homoallylic substrate isopentenyl (IPP) to its allylic isomer, dimethylallyl diphosphate (DMAPP). The sequence is that of Isopentenyl-diphosphate delta-isomerase from Metallosphaera sedula (strain ATCC 51363 / DSM 5348 / JCM 9185 / NBRC 15509 / TH2).